Here is a 164-residue protein sequence, read N- to C-terminus: 3-isopropylmalate dehydratase small subunit 1 (164 aa).

This sequence belongs to the LeuD family. LeuD type 2 subfamily. As to quaternary structure, heterodimer of LeuC and LeuD.

It catalyses the reaction (2R,3S)-3-isopropylmalate = (2S)-2-isopropylmalate. It functions in the pathway amino-acid biosynthesis; L-leucine biosynthesis; L-leucine from 3-methyl-2-oxobutanoate: step 2/4. In terms of biological role, catalyzes the isomerization between 2-isopropylmalate and 3-isopropylmalate, via the formation of 2-isopropylmaleate. This chain is 3-isopropylmalate dehydratase small subunit 1 (leuD1), found in Pyrococcus abyssi (strain GE5 / Orsay).